The sequence spans 417 residues: Gamma-glutamyl phosphate reductase (417 aa).

The protein belongs to the gamma-glutamyl phosphate reductase family.

The protein resides in the cytoplasm. It carries out the reaction L-glutamate 5-semialdehyde + phosphate + NADP(+) = L-glutamyl 5-phosphate + NADPH + H(+). The protein operates within amino-acid biosynthesis; L-proline biosynthesis; L-glutamate 5-semialdehyde from L-glutamate: step 2/2. Catalyzes the NADPH-dependent reduction of L-glutamate 5-phosphate into L-glutamate 5-semialdehyde and phosphate. The product spontaneously undergoes cyclization to form 1-pyrroline-5-carboxylate. The protein is Gamma-glutamyl phosphate reductase of Serratia proteamaculans (strain 568).